The following is a 617-amino-acid chain: Isopropyl malate synthase gloH (617 aa).

In terms of domain architecture, Pyruvate carboxyltransferase spans 47 to 325 (PIWLSTDLRD…ETGLDFSDLL (279 aa)).

The protein belongs to the alpha-IPM synthase/homocitrate synthase family. LeuA type 2 subfamily.

It carries out the reaction 3-methyl-2-oxobutanoate + acetyl-CoA + H2O = (2S)-2-isopropylmalate + CoA + H(+). It participates in mycotoxin biosynthesis. Its function is as follows. 2-isopropylmalate synthase; part of the gene cluster that mediates the biosynthesis of pneumocandins, lipohexapeptides of the echinocandin family that prevent fungal cell wall formation by non-competitive inhibition of beta-1,3-glucan synthase. The 10,12-dimethylmyristoyl side chain is synthesized by the reducing polyketide synthase gloL/GLPKS4. The thioesterase gloN/GLHYD exclusively interacts with gloL/GLPKS4 to maintain turnover of the polyketide side chain. The 10R,12S-dimethylmyristic acid is then transferred to the first thiolation domain of the nonribosomal peptide synthetase gloA/GLNRPS4 by the acyl-AMP ligase gloD/GLligase, followed by its acylation to L-ornithine to trigger elongation of the cyclic hexapeptide. L-ornithine, 4R-hydroxyl-L-proline (generated from L-proline by the dioxygenase gloF/GLOXY2), 3S-hydroxyl-L-homotyrosine (generated by gloG/GLHtyB, gloH/GLHtyA, gloI/GLHtyC, gloJ/GLHtyD and hydroxylated at C-3 by the dioxygenase gloM/GLOXY1), 3R-hydroxyl-L-glutamine (generated from L-glutamine probably by the dioxygenase gloE/GLOXY3) and 3S-hydroxyl-L-proline (generated from L-proline by the dioxygenase gloF/GLOXY2 to yield pneumocandin B0), or 3S-hydroxyl-4S-methyl-L-proline (generated from L-leucine by the dioxygenase gloC/GLOXY4 to yield pneumocandin A0) are sequentially added to the growing chain. The last C domain of gloA/GLNRPS4 is proposed to be responsible for cyclization by condensation to form the peptide bond between L-ornithine and 3S-hydroxyl-4S-methyl-L-proline (for pneumocandin A0) or 3S-hydroxyl-L-proline (for pneumocandin B0). Finally, the subsequent C-4 hydroxylation of 3S-hydroxyl-L-homotyrosine and L-ornithine dihydroxylation at C-4 and C-5 are performed by the cytochrome P450 monooxygenases gloP/GLP450-1 and gloO/GLP450-2, respectively. In Glarea lozoyensis (strain ATCC 20868 / MF5171), this protein is Isopropyl malate synthase gloH.